A 34-amino-acid polypeptide reads, in one-letter code: Non-cysteinic peptide Bs 10 (34 aa).

Residues 1-34 form a disordered region; the sequence is VTMGYIKDGDGKKIAKKKNKNGRKHVEIDLNKVG. A compositionally biased stretch (basic residues) spans 14–23; sequence IAKKKNKNGR. A compositionally biased stretch (basic and acidic residues) spans 24–34; the sequence is KHVEIDLNKVG.

In terms of tissue distribution, expressed by the venom gland.

The protein resides in the secreted. The polypeptide is Non-cysteinic peptide Bs 10 (Hottentotta tamulus sindicus (Scorpion)).